We begin with the raw amino-acid sequence, 1311 residues long: Zinc finger protein 423 (1311 aa).

The segment covering 1-11 has biased composition (basic residues); that stretch reads MSRRKQAKPRS. Disordered regions lie at residues 1 to 21, 34 to 70, and 95 to 123; these read MSRR…EASD, GGLE…EDVE, and AHRC…VASP. A compositionally biased stretch (basic and acidic residues) spans 41–54; sequence ECDRKSSRALEDRN. 2 positions are modified to phosphoserine: Ser-55 and Ser-58. Residues 75–101 form a C2H2-type 1; degenerate zinc finger; sequence YTCDHCQQDFESLADLTDHRAHRCPGD. Positions 110 to 123 are enriched in polar residues; sequence WVASSPSSKDVASP. 7 C2H2-type zinc fingers span residues 146-168, 174-196, 202-224, 230-252, 271-294, 303-326, and 331-353; these read YPCQ…EQIH, FKCT…IKLH, YHCH…LKTH, FKCS…MQAH, FMCD…LTLH, LQCI…HQAH, and HKCP…LDSH. Positions 354–426 are disordered; it reads RQPDSSNHSV…PLRGQKKMRD (73 aa). The span at 373-382 shows a compositional bias: polar residues; it reads ASMSSATPDS. The segment covering 390–404 has biased composition (low complexity); the sequence is SVASMSSATPDSSAS. A C2H2-type 9; degenerate zinc finger spans residues 436 to 460; that stretch reads YSCPYCSKRDFTSLAVLEIHLKTIH. 3 C2H2-type zinc fingers span residues 468–491, 507–530, and 544–567; these read HTCQ…RKLH, FHCN…RVSH, and FFCN…QQAH. The segment at 590-615 adopts a C2H2-type 13; atypical zinc-finger fold; the sequence is YSCPYCTNSPIFGSILKLTKHIKENH. Residues 617–654 form a disordered region; the sequence is NIPLAHSKKSKAEQSPVSSDVEVSSPKRQRLSGSANSI. The residue at position 631 (Ser-631) is a Phosphoserine. Low complexity predominate over residues 631-642; sequence SPVSSDVEVSSP. 7 consecutive C2H2-type zinc fingers follow at residues 659–681, 689–711, 719–742, 747–770, 777–800, 808–830, and 834–857; these read YPCN…LKLH, QACP…LTVH, YVCE…LDMH, YHCT…AVKH, YRCT…KHSH, HKCI…ITTH, and YNCR…REKH. The segment at 913 to 935 adopts a C2H2-type 21; degenerate zinc-finger fold; it reads YGCDICGAAYTMEVLLQNHRLRD. 3 C2H2-type zinc fingers span residues 957 to 979, 986 to 1008, and 1047 to 1069; these read HKCN…LQTH, YMCP…KVTH, and FRCV…GTFH. Position 1081 is a phosphoserine (Ser-1081). The segment at 1091 to 1109 adopts a C2H2-type 25; degenerate zinc-finger fold; the sequence is YKCALCLKEFRSKQDLVRL. 5 C2H2-type zinc fingers span residues 1147-1170, 1195-1217, 1225-1247, 1256-1279, and 1286-1309; these read LRCP…QVDH, YQCI…VANH, HECK…LIEH, FKCP…FAVH, and YDCS…MSQH. A compositionally biased stretch (basic and acidic residues) spans 1163-1174; that stretch reads ESHMQVDHRDLT. Residues 1163–1190 form a disordered region; the sequence is ESHMQVDHRDLTPETSGPRKGAQTSPVP.

Belongs to the krueppel C2H2-type zinc-finger protein family. In terms of assembly, homodimer. Interacts with PARP1, SMAD1 and SMAD4. Interacts with EBF1. Interacts with CEP290. As to expression, expressed in brain, eye, olfactory epithelium, spleen and heart. Expressed in the basal layer, consisting of neural precursor cells and immature sensory neurons of the olfactory epithelium, but not in the mature receptor cells.

The protein resides in the nucleus. In terms of biological role, transcription factor that can both act as an activator or a repressor depending on the context. Plays a central role in BMP signaling and olfactory neurogenesis. Associates with SMADs in response to BMP2 leading to activate transcription of BMP target genes. Acts as a transcriptional repressor via its interaction with EBF1, a transcription factor involved in terminal olfactory receptor neurons differentiation; this interaction preventing EBF1 to bind DNA and activate olfactory-specific genes. Involved in olfactory neurogenesis by participating in a developmental switch that regulates the transition from differentiation to maturation in olfactory receptor neurons. Controls proliferation and differentiation of neural precursors in cerebellar vermis formation. The sequence is that of Zinc finger protein 423 (Znf423) from Rattus norvegicus (Rat).